We begin with the raw amino-acid sequence, 331 residues long: Thiamine thiazole synthase (331 aa).

Substrate is bound by residues Cys86, 107-108 (EA), Gly115, and Val183. Cys220 is modified (2,3-didehydroalanine (Cys)). Residues Asp222, His237, Met289, and 299–301 (RMG) each bind substrate.

This sequence belongs to the THI4 family. Homooctamer. Fe cation is required as a cofactor. Post-translationally, during the catalytic reaction, a sulfide is transferred from Cys-220 to a reaction intermediate, generating a dehydroalanine residue.

It localises to the cytoplasm. The protein resides in the nucleus. It catalyses the reaction [ADP-thiazole synthase]-L-cysteine + glycine + NAD(+) = [ADP-thiazole synthase]-dehydroalanine + ADP-5-ethyl-4-methylthiazole-2-carboxylate + nicotinamide + 3 H2O + 2 H(+). In terms of biological role, involved in biosynthesis of the thiamine precursor thiazole. Catalyzes the conversion of NAD and glycine to adenosine diphosphate 5-(2-hydroxyethyl)-4-methylthiazole-2-carboxylic acid (ADT), an adenylated thiazole intermediate. The reaction includes an iron-dependent sulfide transfer from a conserved cysteine residue of the protein to a thiazole intermediate. The enzyme can only undergo a single turnover, which suggests it is a suicide enzyme. May have additional roles in adaptation to various stress conditions and in DNA damage tolerance. This is Thiamine thiazole synthase from Emericella nidulans (strain FGSC A4 / ATCC 38163 / CBS 112.46 / NRRL 194 / M139) (Aspergillus nidulans).